A 355-amino-acid chain; its full sequence is UDP-N-acetylglucosamine--N-acetylmuramyl-(pentapeptide) pyrophosphoryl-undecaprenol N-acetylglucosamine transferase (355 aa).

Residues Thr15 to Gly17, Asn127, Arg163, Ser191, Ile244, Ala263 to Glu268, and Gln288 each bind UDP-N-acetyl-alpha-D-glucosamine.

Belongs to the glycosyltransferase 28 family. MurG subfamily.

Its subcellular location is the cell inner membrane. The enzyme catalyses di-trans,octa-cis-undecaprenyl diphospho-N-acetyl-alpha-D-muramoyl-L-alanyl-D-glutamyl-meso-2,6-diaminopimeloyl-D-alanyl-D-alanine + UDP-N-acetyl-alpha-D-glucosamine = di-trans,octa-cis-undecaprenyl diphospho-[N-acetyl-alpha-D-glucosaminyl-(1-&gt;4)]-N-acetyl-alpha-D-muramoyl-L-alanyl-D-glutamyl-meso-2,6-diaminopimeloyl-D-alanyl-D-alanine + UDP + H(+). It participates in cell wall biogenesis; peptidoglycan biosynthesis. Functionally, cell wall formation. Catalyzes the transfer of a GlcNAc subunit on undecaprenyl-pyrophosphoryl-MurNAc-pentapeptide (lipid intermediate I) to form undecaprenyl-pyrophosphoryl-MurNAc-(pentapeptide)GlcNAc (lipid intermediate II). This is UDP-N-acetylglucosamine--N-acetylmuramyl-(pentapeptide) pyrophosphoryl-undecaprenol N-acetylglucosamine transferase from Salmonella dublin (strain CT_02021853).